The sequence spans 145 residues: Maximins 3/H3 type 1 (145 aa).

The N-terminal stretch at methionine 1–alanine 18 is a signal peptide. 2 consecutive propeptides follow at residues arginine 19–isoleucine 43 and arginine 74–arginine 124. Isoleucine amide is present on isoleucine 144.

Belongs to the bombinin family. In terms of tissue distribution, expressed by the skin glands.

It localises to the secreted. Functionally, maximin-3 shows antibacterial activity against both Gram-positive and Gram-negative bacteria. It also shows antimicrobial activity against the fungus C.albicans, but not against A.flavus nor P.uticale. It has little hemolytic activity. It possess a significant cytotoxicity against tumor cell lines. It possess a significant anti-HIV activity. It shows high spermicidal activity. Its function is as follows. Maximin-H3 shows antibacterial activity against both Gram-positive and Gram-negative bacteria. It also shows antimicrobial activity against the fungus C.albicans. Shows strong hemolytic activity. The chain is Maximins 3/H3 type 1 from Bombina maxima (Giant fire-bellied toad).